A 98-amino-acid polypeptide reads, in one-letter code: Large ribosomal subunit protein uL23 (98 aa).

Belongs to the universal ribosomal protein uL23 family. In terms of assembly, part of the 50S ribosomal subunit. Contacts protein L29, and trigger factor when it is bound to the ribosome.

One of the early assembly proteins it binds 23S rRNA. One of the proteins that surrounds the polypeptide exit tunnel on the outside of the ribosome. Forms the main docking site for trigger factor binding to the ribosome. The sequence is that of Large ribosomal subunit protein uL23 from Herpetosiphon aurantiacus (strain ATCC 23779 / DSM 785 / 114-95).